The primary structure comprises 245 residues: tRNA (guanine-N(7)-)-methyltransferase (245 aa).

Residues E69, E94, D121, and D144 each coordinate S-adenosyl-L-methionine. The active site involves D144. Residues K148, D180, and 217–220 contribute to the substrate site; that span reads TKFE. The tract at residues 200 to 225 is disordered; the sequence is NLSSSGDYVPRPENRPKTKFERRGEG. The segment covering 209–225 has biased composition (basic and acidic residues); the sequence is PRPENRPKTKFERRGEG.

Belongs to the class I-like SAM-binding methyltransferase superfamily. TrmB family.

It carries out the reaction guanosine(46) in tRNA + S-adenosyl-L-methionine = N(7)-methylguanosine(46) in tRNA + S-adenosyl-L-homocysteine. It functions in the pathway tRNA modification; N(7)-methylguanine-tRNA biosynthesis. Functionally, catalyzes the formation of N(7)-methylguanine at position 46 (m7G46) in tRNA. The sequence is that of tRNA (guanine-N(7)-)-methyltransferase from Idiomarina loihiensis (strain ATCC BAA-735 / DSM 15497 / L2-TR).